Reading from the N-terminus, the 216-residue chain is Octanoyltransferase (216 aa).

The BPL/LPL catalytic domain occupies 30–216 (GEAGEAVWLL…KRQFFEVFGA (187 aa)). Residues 69–76 (RGGQYTYH), 149–151 (AIG), and 162–164 (GLS) contribute to the substrate site. C180 serves as the catalytic Acyl-thioester intermediate.

It belongs to the LipB family.

It is found in the cytoplasm. It catalyses the reaction octanoyl-[ACP] + L-lysyl-[protein] = N(6)-octanoyl-L-lysyl-[protein] + holo-[ACP] + H(+). It functions in the pathway protein modification; protein lipoylation via endogenous pathway; protein N(6)-(lipoyl)lysine from octanoyl-[acyl-carrier-protein]: step 1/2. Catalyzes the transfer of endogenously produced octanoic acid from octanoyl-acyl-carrier-protein onto the lipoyl domains of lipoate-dependent enzymes. Lipoyl-ACP can also act as a substrate although octanoyl-ACP is likely to be the physiological substrate. This chain is Octanoyltransferase, found in Jannaschia sp. (strain CCS1).